The chain runs to 212 residues: Pyridoxine/pyridoxamine 5'-phosphate oxidase (212 aa).

Substrate-binding positions include Arg8 to Tyr11 and Lys66. FMN contacts are provided by residues Arg61 to Lys66, Phe76 to Thr77, Arg82, Lys83, and Gln105. Positions 123, 127, and 131 each coordinate substrate. FMN-binding positions include Gln140–Ser141 and Trp185. Residue Arg191–His193 participates in substrate binding. Position 195 (Arg195) interacts with FMN.

Belongs to the pyridoxamine 5'-phosphate oxidase family. As to quaternary structure, homodimer. The cofactor is FMN.

The enzyme catalyses pyridoxamine 5'-phosphate + O2 + H2O = pyridoxal 5'-phosphate + H2O2 + NH4(+). The catalysed reaction is pyridoxine 5'-phosphate + O2 = pyridoxal 5'-phosphate + H2O2. Its pathway is cofactor metabolism; pyridoxal 5'-phosphate salvage; pyridoxal 5'-phosphate from pyridoxamine 5'-phosphate: step 1/1. It functions in the pathway cofactor metabolism; pyridoxal 5'-phosphate salvage; pyridoxal 5'-phosphate from pyridoxine 5'-phosphate: step 1/1. In terms of biological role, catalyzes the oxidation of either pyridoxine 5'-phosphate (PNP) or pyridoxamine 5'-phosphate (PMP) into pyridoxal 5'-phosphate (PLP). The polypeptide is Pyridoxine/pyridoxamine 5'-phosphate oxidase (Shewanella sp. (strain W3-18-1)).